A 215-amino-acid polypeptide reads, in one-letter code: Ribosomal RNA small subunit methyltransferase G (215 aa).

Residues glycine 78, leucine 83, alanine 128–glutamate 129, and arginine 146 contribute to the S-adenosyl-L-methionine site.

Belongs to the methyltransferase superfamily. RNA methyltransferase RsmG family.

The protein localises to the cytoplasm. The enzyme catalyses guanosine(527) in 16S rRNA + S-adenosyl-L-methionine = N(7)-methylguanosine(527) in 16S rRNA + S-adenosyl-L-homocysteine. Its function is as follows. Specifically methylates the N7 position of guanine in position 527 of 16S rRNA. In Anaeromyxobacter dehalogenans (strain 2CP-1 / ATCC BAA-258), this protein is Ribosomal RNA small subunit methyltransferase G.